The sequence spans 263 residues: HTH-type transcriptional repressor NanR (263 aa).

Positions 1-24 (MSPMNAFDSQTEDSSPAIGRNLRS) are disordered. The region spanning 30–98 (KKLSEMVEEE…NGERARVSRP (69 aa)) is the HTH gntR-type domain. The segment at residues 58-77 (ERELMAFFNVGRPSVREALA) is a DNA-binding region (H-T-H motif).

This sequence belongs to the NanR family.

In terms of biological role, transcriptional repressor that controls expression of the genes required for the catabolism of sialic acids. This is HTH-type transcriptional repressor NanR from Escherichia coli O127:H6 (strain E2348/69 / EPEC).